The sequence spans 257 residues: MSDLKKAAQKAIELMDLTTLNDDDTDQKVIELCHKAKTPAGNTAAICIYPRFIPIARKTLNEMGCEEIKIATVTNFPHGNDDIAIAVLETRAAVAYGADEVDVVFPYRALMEGNETVGYELVKACKEACGDDVLLKVIIESGVLQDPALIRKASELSIDAGADFIKTSTGKVEVNATLEAAEIMMTVIAEKNPKVGFKPAGGVRDAAAAEEFLGVAERLLGKGWATPRTFRFGASSLLNNLLHTLELAEAPKGPQGY.

Asp-102 acts as the Proton donor/acceptor in catalysis. Lys-166 functions as the Schiff-base intermediate with acetaldehyde in the catalytic mechanism. Lys-198 (proton donor/acceptor) is an active-site residue.

This sequence belongs to the DeoC/FbaB aldolase family. DeoC type 2 subfamily.

Its subcellular location is the cytoplasm. The catalysed reaction is 2-deoxy-D-ribose 5-phosphate = D-glyceraldehyde 3-phosphate + acetaldehyde. The protein operates within carbohydrate degradation; 2-deoxy-D-ribose 1-phosphate degradation; D-glyceraldehyde 3-phosphate and acetaldehyde from 2-deoxy-alpha-D-ribose 1-phosphate: step 2/2. Functionally, catalyzes a reversible aldol reaction between acetaldehyde and D-glyceraldehyde 3-phosphate to generate 2-deoxy-D-ribose 5-phosphate. This Shewanella loihica (strain ATCC BAA-1088 / PV-4) protein is Deoxyribose-phosphate aldolase.